Here is a 640-residue protein sequence, read N- to C-terminus: Threonine--tRNA ligase (640 aa).

Positions 1 to 61 constitute a TGS domain; it reads MPIITLPNGD…TEDATLQIIT (61 aa). Positions 242–533 are catalytic; it reads DHRKIGKALD…LIEHYAGFMP (292 aa). Zn(2+)-binding residues include C333, H384, and H510.

Belongs to the class-II aminoacyl-tRNA synthetase family. Homodimer. Requires Zn(2+) as cofactor.

It localises to the cytoplasm. The catalysed reaction is tRNA(Thr) + L-threonine + ATP = L-threonyl-tRNA(Thr) + AMP + diphosphate + H(+). Catalyzes the attachment of threonine to tRNA(Thr) in a two-step reaction: L-threonine is first activated by ATP to form Thr-AMP and then transferred to the acceptor end of tRNA(Thr). Also edits incorrectly charged L-seryl-tRNA(Thr). The sequence is that of Threonine--tRNA ligase from Acinetobacter baylyi (strain ATCC 33305 / BD413 / ADP1).